Reading from the N-terminus, the 302-residue chain is Aspartate carbamoyltransferase catalytic subunit (302 aa).

Carbamoyl phosphate contacts are provided by arginine 51 and threonine 52. Position 80 (lysine 80) interacts with L-aspartate. Carbamoyl phosphate is bound by residues arginine 101, histidine 129, and glutamine 132. L-aspartate-binding residues include arginine 162 and arginine 223. Residues leucine 261 and proline 262 each coordinate carbamoyl phosphate.

This sequence belongs to the aspartate/ornithine carbamoyltransferase superfamily. ATCase family. As to quaternary structure, heterododecamer (2C3:3R2) of six catalytic PyrB chains organized as two trimers (C3), and six regulatory PyrI chains organized as three dimers (R2).

It carries out the reaction carbamoyl phosphate + L-aspartate = N-carbamoyl-L-aspartate + phosphate + H(+). Its pathway is pyrimidine metabolism; UMP biosynthesis via de novo pathway; (S)-dihydroorotate from bicarbonate: step 2/3. Its function is as follows. Catalyzes the condensation of carbamoyl phosphate and aspartate to form carbamoyl aspartate and inorganic phosphate, the committed step in the de novo pyrimidine nucleotide biosynthesis pathway. In Chromobacterium violaceum (strain ATCC 12472 / DSM 30191 / JCM 1249 / CCUG 213 / NBRC 12614 / NCIMB 9131 / NCTC 9757 / MK), this protein is Aspartate carbamoyltransferase catalytic subunit.